Consider the following 48-residue polypeptide: uncharacterized protein (48 aa).

This is an uncharacterized protein from Treponema pallidum (strain Nichols).